A 617-amino-acid chain; its full sequence is AUGMIN subunit 3 (617 aa).

Coiled coils occupy residues 107 to 140 (DATL…SSAL), 314 to 334 (LHSL…LYQK), and 481 to 504 (AIIQ…ENSL).

Belongs to the HAUS3 family. As to quaternary structure, part of the augmin complex composed of 8 subunits. The complex acts on microtubules and interacts with gamma-tubulin in spindles and the phragmoplast. Interacts with AUG1.

It localises to the cytoplasm. The protein localises to the cytoskeleton. It is found in the spindle. Its subcellular location is the phragmoplast. Functionally, involved in microtubules reorganization during spindle and phragmoplast development. Required for gamma-tubulin localization during mitosis. The protein is AUGMIN subunit 3 of Arabidopsis thaliana (Mouse-ear cress).